A 406-amino-acid polypeptide reads, in one-letter code: Vacuole membrane protein 1 (406 aa).

The span at 1 to 20 (MAENGKNCDQRRVAMNKEQH) shows a compositional bias: basic and acidic residues. The tract at residues 1 to 36 (MAENGKNCDQRRVAMNKEQHNGNFTDPSSVNEKKRR) is disordered. At Ala2 the chain carries N-acetylalanine. At 2-43 (AENGKNCDQRRVAMNKEQHNGNFTDPSSVNEKKRREREERQN) the chain is on the cytoplasmic side. The span at 21-30 (NGNFTDPSSV) shows a compositional bias: polar residues. A helical membrane pass occupies residues 44 to 64 (IVLWRQPLITLQYFSLEILVI). The Extracellular segment spans residues 65–77 (LKEWTSKLWHRQS). Residues 78–98 (IVVSFLLLLAVLIATYYVEGA) form a helical membrane-spanning segment. Over 99–109 (HQQYVQRIEKQ) the chain is Cytoplasmic. The helical transmembrane segment at 110–130 (FLLYAYWIGLGILSSVGLGTG) threads the bilayer. Topologically, residues 131-250 (LHTFLLYLGP…ASRAKLAVQK (120 aa)) are extracellular. The tract at residues 173-316 (GTEGTISLWS…FVIITFSKHI (144 aa)) is VTT domain. The helical transmembrane segment at 251–271 (LVQKVGFFGILACASIPNPLF) threads the bilayer. Residues 272–273 (DL) are Cytoplasmic-facing. The helical transmembrane segment at 274–294 (AGITCGHFLVPFWTFFGATLI) threads the bilayer. At 295–305 (GKAIIKMHIQK) the chain is on the extracellular side. Residues 306–326 (IFVIITFSKHIVEQMVAFIGA) traverse the membrane as a helical segment. Residues 327–363 (VPGIGPSLQKPFQEYLEAQRQKLHHKSEMGTPQGENW) lie on the Cytoplasmic side of the membrane. The chain crosses the membrane as a helical span at residues 364–384 (LSWMFEKLVVVMVCYFILSII). The Extracellular portion of the chain corresponds to 385–406 (NSMAQSYAKRIQQRLNSEEKTK).

Belongs to the VMP1 family. Interacts with BECN1. Interacts with TJP1. Interacts with TP53INP2. Interacts with TMEM41B. Interacts with ATP2A2, PLN and SLN; competes with PLN and SLN to prevent them from forming an inhibitory complex with ATP2A2. Interacts with ATG2A.

Its subcellular location is the endoplasmic reticulum-Golgi intermediate compartment membrane. The protein resides in the cell membrane. The protein localises to the vacuole membrane. It is found in the endoplasmic reticulum membrane. The catalysed reaction is a 1,2-diacyl-sn-glycero-3-phospho-L-serine(in) = a 1,2-diacyl-sn-glycero-3-phospho-L-serine(out). The enzyme catalyses cholesterol(in) = cholesterol(out). It catalyses the reaction a 1,2-diacyl-sn-glycero-3-phosphocholine(in) = a 1,2-diacyl-sn-glycero-3-phosphocholine(out). It carries out the reaction a 1,2-diacyl-sn-glycero-3-phosphoethanolamine(in) = a 1,2-diacyl-sn-glycero-3-phosphoethanolamine(out). In terms of biological role, phospholipid scramblase involved in lipid homeostasis and membrane dynamics processes. Has phospholipid scramblase activity toward cholesterol and phosphatidylserine, as well as phosphatidylethanolamine and phosphatidylcholine. Required for autophagosome formation: participates in early stages of autophagosome biogenesis at the endoplasmic reticulum (ER) membrane by reequilibrating the leaflets of the ER as lipids are extracted by ATG2 (ATG2A or ATG2B) to mediate autophagosome assembly. Regulates ATP2A2 activity to control ER-isolation membrane contacts for autophagosome formation. In addition to autophagy, involved in other processes in which phospholipid scramblase activity is required. Modulates ER contacts with lipid droplets, mitochondria and endosomes. Plays an essential role in formation of cell junctions. Upon stress such as bacterial and viral infection, promotes formation of cytoplasmic vacuoles followed by cell death. Involved in the cytoplasmic vacuolization of acinar cells during the early stage of acute pancreatitis. This chain is Vacuole membrane protein 1, found in Pongo abelii (Sumatran orangutan).